An 808-amino-acid chain; its full sequence is uncharacterized protein (808 aa).

In terms of domain architecture, EF-hand 1 spans 6–41 (SRSEKVKRIFQQFDGNHDGGLNREEMAALVVAVNPR). 7 TPR repeats span residues 234 to 267 (FDGH…QPTD), 269 to 301 (RPHF…AESG), 310 to 343 (PQIY…CPTH), 344 to 377 (FRAL…KPDY), 378 to 411 (ADAH…KPGH), 412 to 445 (VDAL…WPNH), and 447 to 479 (RAQL…TNRV). An EF-hand 2 domain is found at 600-635 (AIKAINEKILALLDDSGSGRVDMGMFYAVIAPLCGG). Residues 773-794 (FKQEEYKFREYESEAEAMKAKC) are a coiled coil.

This is an uncharacterized protein from Arabidopsis thaliana (Mouse-ear cress).